A 50-amino-acid polypeptide reads, in one-letter code: Mast cell degranulating peptide (50 aa).

Positions 1-27 (MISMLRCTFFFVSVILITSYFVTPTMS) are cleaved as a signal peptide. Lys29 is modified (N6-formyllysine). The cysteines at positions 30 and 42 are disulfide-linked. 2 positions are modified to N6-formyllysine: Lys44 and Lys48. Asparagine amide is present on Asn49.

As to expression, expressed by the venom gland.

It is found in the secreted. Its function is as follows. Potent anti-inflammatory agent. At low concentrations, mediates the degranulation of mast cells thus evoking an inflammatory response. Also acts as a neurotoxin capable of blocking a class of voltage-gated potassium channels. This Apis cerana cerana (Oriental honeybee) protein is Mast cell degranulating peptide.